Consider the following 232-residue polypeptide: 5'-methylthioadenosine/S-adenosylhomocysteine nucleosidase (232 aa).

The active-site Proton acceptor is Glu12. Substrate is bound by residues Gly78, Ile152, and 173–174 (ME). Asp197 (proton donor) is an active-site residue.

The protein belongs to the PNP/UDP phosphorylase family. MtnN subfamily. In terms of assembly, homodimer.

The catalysed reaction is S-adenosyl-L-homocysteine + H2O = S-(5-deoxy-D-ribos-5-yl)-L-homocysteine + adenine. It carries out the reaction S-methyl-5'-thioadenosine + H2O = 5-(methylsulfanyl)-D-ribose + adenine. The enzyme catalyses 5'-deoxyadenosine + H2O = 5-deoxy-D-ribose + adenine. It functions in the pathway amino-acid biosynthesis; L-methionine biosynthesis via salvage pathway; S-methyl-5-thio-alpha-D-ribose 1-phosphate from S-methyl-5'-thioadenosine (hydrolase route): step 1/2. Catalyzes the irreversible cleavage of the glycosidic bond in both 5'-methylthioadenosine (MTA) and S-adenosylhomocysteine (SAH/AdoHcy) to adenine and the corresponding thioribose, 5'-methylthioribose and S-ribosylhomocysteine, respectively. Also cleaves 5'-deoxyadenosine, a toxic by-product of radical S-adenosylmethionine (SAM) enzymes, into 5-deoxyribose and adenine. Thus, is required for in vivo function of the radical SAM enzymes biotin synthase and lipoic acid synthase, that are inhibited by 5'-deoxyadenosine accumulation. The sequence is that of 5'-methylthioadenosine/S-adenosylhomocysteine nucleosidase from Klebsiella pneumoniae (strain 342).